A 254-amino-acid chain; its full sequence is Thiazole synthase (254 aa).

The Schiff-base intermediate with DXP role is filled by Lys-96. 1-deoxy-D-xylulose 5-phosphate is bound by residues Gly-157, 183 to 184 (AG), and 205 to 206 (NT).

The protein belongs to the ThiG family. Homotetramer. Forms heterodimers with either ThiH or ThiS.

The protein localises to the cytoplasm. It carries out the reaction [ThiS sulfur-carrier protein]-C-terminal-Gly-aminoethanethioate + 2-iminoacetate + 1-deoxy-D-xylulose 5-phosphate = [ThiS sulfur-carrier protein]-C-terminal Gly-Gly + 2-[(2R,5Z)-2-carboxy-4-methylthiazol-5(2H)-ylidene]ethyl phosphate + 2 H2O + H(+). The protein operates within cofactor biosynthesis; thiamine diphosphate biosynthesis. Catalyzes the rearrangement of 1-deoxy-D-xylulose 5-phosphate (DXP) to produce the thiazole phosphate moiety of thiamine. Sulfur is provided by the thiocarboxylate moiety of the carrier protein ThiS. In vitro, sulfur can be provided by H(2)S. The polypeptide is Thiazole synthase (Clostridium perfringens (strain SM101 / Type A)).